Consider the following 23-residue polypeptide: Coenzyme PQQ synthesis protein A (23 aa).

A cross-link (pyrroloquinoline quinone (Glu-Tyr)) is located at residues 15–19; it reads EVTMY.

This sequence belongs to the PqqA family.

The protein operates within cofactor biosynthesis; pyrroloquinoline quinone biosynthesis. Required for coenzyme pyrroloquinoline quinone (PQQ) biosynthesis. PQQ is probably formed by cross-linking a specific glutamate to a specific tyrosine residue and excising these residues from the peptide. This Ectopseudomonas mendocina (strain ymp) (Pseudomonas mendocina) protein is Coenzyme PQQ synthesis protein A.